The chain runs to 494 residues: Probable cytosol aminopeptidase (494 aa).

2 residues coordinate Mn(2+): K260 and D265. K272 is an active-site residue. Mn(2+)-binding residues include D283, D342, and E344. The active site involves R346.

The protein belongs to the peptidase M17 family. Mn(2+) is required as a cofactor.

The protein resides in the cytoplasm. It carries out the reaction Release of an N-terminal amino acid, Xaa-|-Yaa-, in which Xaa is preferably Leu, but may be other amino acids including Pro although not Arg or Lys, and Yaa may be Pro. Amino acid amides and methyl esters are also readily hydrolyzed, but rates on arylamides are exceedingly low.. The enzyme catalyses Release of an N-terminal amino acid, preferentially leucine, but not glutamic or aspartic acids.. Presumably involved in the processing and regular turnover of intracellular proteins. Catalyzes the removal of unsubstituted N-terminal amino acids from various peptides. The chain is Probable cytosol aminopeptidase from Bacillus cereus (strain ATCC 10987 / NRS 248).